The chain runs to 878 residues: Alanine--tRNA ligase (878 aa).

Residues H562, H566, C670, and H674 each coordinate Zn(2+).

It belongs to the class-II aminoacyl-tRNA synthetase family. Requires Zn(2+) as cofactor.

It localises to the cytoplasm. It carries out the reaction tRNA(Ala) + L-alanine + ATP = L-alanyl-tRNA(Ala) + AMP + diphosphate. Functionally, catalyzes the attachment of alanine to tRNA(Ala) in a two-step reaction: alanine is first activated by ATP to form Ala-AMP and then transferred to the acceptor end of tRNA(Ala). Also edits incorrectly charged Ser-tRNA(Ala) and Gly-tRNA(Ala) via its editing domain. In Acinetobacter baumannii (strain ACICU), this protein is Alanine--tRNA ligase.